The chain runs to 329 residues: GTP 3',8-cyclase 1 (329 aa).

Residues 7–230 (GQGRQIDYLR…LDSAEQSGGP (224 aa)) form the Radical SAM core domain. A GTP-binding site is contributed by R16. [4Fe-4S] cluster-binding residues include C23 and C27. Y29 contacts S-adenosyl-L-methionine. C30 provides a ligand contact to [4Fe-4S] cluster. R65 is a GTP binding site. G69 lines the S-adenosyl-L-methionine pocket. T96 serves as a coordination point for GTP. Residue S120 participates in S-adenosyl-L-methionine binding. K157 serves as a coordination point for GTP. An S-adenosyl-L-methionine-binding site is contributed by M191. [4Fe-4S] cluster-binding residues include C255 and C258. 260-262 (RLR) is a GTP binding site. Position 272 (C272) interacts with [4Fe-4S] cluster.

It belongs to the radical SAM superfamily. MoaA family. In terms of assembly, monomer and homodimer. The cofactor is [4Fe-4S] cluster.

The enzyme catalyses GTP + AH2 + S-adenosyl-L-methionine = (8S)-3',8-cyclo-7,8-dihydroguanosine 5'-triphosphate + 5'-deoxyadenosine + L-methionine + A + H(+). It participates in cofactor biosynthesis; molybdopterin biosynthesis. Functionally, catalyzes the cyclization of GTP to (8S)-3',8-cyclo-7,8-dihydroguanosine 5'-triphosphate. The polypeptide is GTP 3',8-cyclase 1 (moaA1) (Pseudomonas aeruginosa (strain ATCC 15692 / DSM 22644 / CIP 104116 / JCM 14847 / LMG 12228 / 1C / PRS 101 / PAO1)).